A 237-amino-acid chain; its full sequence is Cobalt-precorrin-2 C(20)-methyltransferase (237 aa).

The protein belongs to the precorrin methyltransferase family. In terms of assembly, homodimer.

The enzyme catalyses Co-precorrin-2 + S-adenosyl-L-methionine = Co-precorrin-3 + S-adenosyl-L-homocysteine + H(+). It functions in the pathway cofactor biosynthesis; adenosylcobalamin biosynthesis; cob(II)yrinate a,c-diamide from sirohydrochlorin (anaerobic route): step 2/10. Methylates cobalt-precorrin-2 at the C-20 position to produce cobalt-precorrin-3A in the anaerobic cobalamin biosynthesis pathway. The polypeptide is Cobalt-precorrin-2 C(20)-methyltransferase (cbiL) (Salmonella typhimurium (strain LT2 / SGSC1412 / ATCC 700720)).